Reading from the N-terminus, the 462-residue chain is Ribosomal protein uS12 methylthiotransferase RimO (462 aa).

An MTTase N-terminal domain is found at 22–133 (ASVAFLHLGC…IIEVLQRVRQ (112 aa)). Cysteine 31, cysteine 67, cysteine 96, cysteine 171, cysteine 175, and cysteine 178 together coordinate [4Fe-4S] cluster. The region spanning 157–386 (TTGRFVSYLK…VAIQQPISAA (230 aa)) is the Radical SAM core domain. Residues 389 to 460 (QALIGQTVDV…LYDLTGEINH (72 aa)) form the TRAM domain.

The protein belongs to the methylthiotransferase family. RimO subfamily. [4Fe-4S] cluster is required as a cofactor.

It localises to the cytoplasm. The enzyme catalyses L-aspartate(89)-[ribosomal protein uS12]-hydrogen + (sulfur carrier)-SH + AH2 + 2 S-adenosyl-L-methionine = 3-methylsulfanyl-L-aspartate(89)-[ribosomal protein uS12]-hydrogen + (sulfur carrier)-H + 5'-deoxyadenosine + L-methionine + A + S-adenosyl-L-homocysteine + 2 H(+). Catalyzes the methylthiolation of an aspartic acid residue of ribosomal protein uS12. This is Ribosomal protein uS12 methylthiotransferase RimO from Prochlorococcus marinus (strain MIT 9211).